Reading from the N-terminus, the 879-residue chain is Alanine--tRNA ligase (879 aa).

The Zn(2+) site is built by His-566, His-570, Cys-668, and His-672.

The protein belongs to the class-II aminoacyl-tRNA synthetase family. It depends on Zn(2+) as a cofactor.

It localises to the cytoplasm. The catalysed reaction is tRNA(Ala) + L-alanine + ATP = L-alanyl-tRNA(Ala) + AMP + diphosphate. In terms of biological role, catalyzes the attachment of alanine to tRNA(Ala) in a two-step reaction: alanine is first activated by ATP to form Ala-AMP and then transferred to the acceptor end of tRNA(Ala). Also edits incorrectly charged Ser-tRNA(Ala) and Gly-tRNA(Ala) via its editing domain. This Listeria innocua serovar 6a (strain ATCC BAA-680 / CLIP 11262) protein is Alanine--tRNA ligase.